The following is a 178-amino-acid chain: Putative type II secretion system M-type protein YghD (178 aa).

Residues M1–M39 lie on the Cytoplasmic side of the membrane. The chain crosses the membrane as a helical span at residues L40 to L60. The Periplasmic portion of the chain corresponds to S61 to G178.

Belongs to the GSP M family.

Its subcellular location is the cell inner membrane. In terms of biological role, involved in a type II secretion system (T2SS, formerly general secretion pathway, GSP) for the export of folded proteins across the outer membrane. The polypeptide is Putative type II secretion system M-type protein YghD (yghD) (Escherichia coli (strain K12)).